Reading from the N-terminus, the 99-residue chain is Large ribosomal subunit protein bL21 (99 aa).

This sequence belongs to the bacterial ribosomal protein bL21 family. Part of the 50S ribosomal subunit. Contacts protein L20.

Its function is as follows. This protein binds to 23S rRNA in the presence of protein L20. This Deinococcus geothermalis (strain DSM 11300 / CIP 105573 / AG-3a) protein is Large ribosomal subunit protein bL21.